We begin with the raw amino-acid sequence, 490 residues long: MNKVRVRFAPSPTGSLHIGGARTALFNWLFARHHNGTFVLRIDDTDTERSTEASYKEILAAMGWLGLDWDEGPEKGGQFGPYLQSQRLELYRREAARLLNEGKAYLCYCTVEELAERRRQAQAEGRPPMYDRRCRYLTPADRTRLEQEGRQPVIRLAVPETGTTVVKDLIRGDVAFENATIDDFIIFKSNGMPTYNFATVIDDHLMQISHIIRAEEHLSNTPKQILVYQALAYELPAFAHVPMILAPDRSKLSKRHGATSVEEYRDEGYLPEAIINYLALLGWSPEGEEEIIPLEKIIEQFSLERVSKNAAIYDTKKLTWINGHYLREGNLDRITRLALPFLQAKGLLPDPLPEKDYNYVRSVIAAVRDRVKTLAEVADAASYFFTDVTNYEEKGIRKHFTRPGAAALLDEARERLATLPEFNAQAAEEAYRSLAEGKGISTGQLFHPTRLAISGRTMGPGLFEIMELLGRETVLARLDRAARWIRENLA.

The 'HIGH' region signature appears at 10-20 (PSPTGSLHIGG). A 'KMSKS' region motif is present at residues 251 to 255 (KLSKR). ATP is bound at residue Lys-254.

This sequence belongs to the class-I aminoacyl-tRNA synthetase family. Glutamate--tRNA ligase type 1 subfamily. In terms of assembly, monomer.

The protein resides in the cytoplasm. The enzyme catalyses tRNA(Glu) + L-glutamate + ATP = L-glutamyl-tRNA(Glu) + AMP + diphosphate. Catalyzes the attachment of glutamate to tRNA(Glu) in a two-step reaction: glutamate is first activated by ATP to form Glu-AMP and then transferred to the acceptor end of tRNA(Glu). The sequence is that of Glutamate--tRNA ligase from Moorella thermoacetica (strain ATCC 39073 / JCM 9320).